The sequence spans 153 residues: 6,7-dimethyl-8-ribityllumazine synthase (153 aa).

Residues Phe22, 56–58 (AFE), and 80–82 (CVI) contribute to the 5-amino-6-(D-ribitylamino)uracil site. 85–86 (AT) contacts (2S)-2-hydroxy-3-oxobutyl phosphate. Residue His88 is the Proton donor of the active site. Phe113 is a 5-amino-6-(D-ribitylamino)uracil binding site. Residue Arg127 participates in (2S)-2-hydroxy-3-oxobutyl phosphate binding.

It belongs to the DMRL synthase family.

The catalysed reaction is (2S)-2-hydroxy-3-oxobutyl phosphate + 5-amino-6-(D-ribitylamino)uracil = 6,7-dimethyl-8-(1-D-ribityl)lumazine + phosphate + 2 H2O + H(+). It participates in cofactor biosynthesis; riboflavin biosynthesis; riboflavin from 2-hydroxy-3-oxobutyl phosphate and 5-amino-6-(D-ribitylamino)uracil: step 1/2. In terms of biological role, catalyzes the formation of 6,7-dimethyl-8-ribityllumazine by condensation of 5-amino-6-(D-ribitylamino)uracil with 3,4-dihydroxy-2-butanone 4-phosphate. This is the penultimate step in the biosynthesis of riboflavin. The chain is 6,7-dimethyl-8-ribityllumazine synthase from Endomicrobium trichonymphae.